Reading from the N-terminus, the 102-residue chain is Pyrimidine/purine nucleoside phosphorylase (102 aa).

This sequence belongs to the nucleoside phosphorylase PpnP family.

The catalysed reaction is a purine D-ribonucleoside + phosphate = a purine nucleobase + alpha-D-ribose 1-phosphate. The enzyme catalyses adenosine + phosphate = alpha-D-ribose 1-phosphate + adenine. It carries out the reaction cytidine + phosphate = cytosine + alpha-D-ribose 1-phosphate. It catalyses the reaction guanosine + phosphate = alpha-D-ribose 1-phosphate + guanine. The catalysed reaction is inosine + phosphate = alpha-D-ribose 1-phosphate + hypoxanthine. The enzyme catalyses thymidine + phosphate = 2-deoxy-alpha-D-ribose 1-phosphate + thymine. It carries out the reaction uridine + phosphate = alpha-D-ribose 1-phosphate + uracil. It catalyses the reaction xanthosine + phosphate = alpha-D-ribose 1-phosphate + xanthine. Its function is as follows. Catalyzes the phosphorolysis of diverse nucleosides, yielding D-ribose 1-phosphate and the respective free bases. Can use uridine, adenosine, guanosine, cytidine, thymidine, inosine and xanthosine as substrates. Also catalyzes the reverse reactions. In Shewanella amazonensis (strain ATCC BAA-1098 / SB2B), this protein is Pyrimidine/purine nucleoside phosphorylase.